The chain runs to 204 residues: Holliday junction branch migration complex subunit RuvA (204 aa).

Positions 1-63 (MIGKLSGKAD…EEHIHLYGFL (63 aa)) are domain I. A domain II region spans residues 64–142 (TLEEKNFFNL…KISSSSAIKD (79 aa)). The tract at residues 143–153 (SLNIKNITPVT) is flexible linker. Residues 153-204 (TSNEVMKALINLGFSRFEAQNVVQGIITQNPKISIDELIKTALKNRNSKFFS) are domain III.

This sequence belongs to the RuvA family. As to quaternary structure, homotetramer. Forms an RuvA(8)-RuvB(12)-Holliday junction (HJ) complex. HJ DNA is sandwiched between 2 RuvA tetramers; dsDNA enters through RuvA and exits via RuvB. An RuvB hexamer assembles on each DNA strand where it exits the tetramer. Each RuvB hexamer is contacted by two RuvA subunits (via domain III) on 2 adjacent RuvB subunits; this complex drives branch migration. In the full resolvosome a probable DNA-RuvA(4)-RuvB(12)-RuvC(2) complex forms which resolves the HJ.

It localises to the cytoplasm. In terms of biological role, the RuvA-RuvB-RuvC complex processes Holliday junction (HJ) DNA during genetic recombination and DNA repair, while the RuvA-RuvB complex plays an important role in the rescue of blocked DNA replication forks via replication fork reversal (RFR). RuvA specifically binds to HJ cruciform DNA, conferring on it an open structure. The RuvB hexamer acts as an ATP-dependent pump, pulling dsDNA into and through the RuvAB complex. HJ branch migration allows RuvC to scan DNA until it finds its consensus sequence, where it cleaves and resolves the cruciform DNA. This is Holliday junction branch migration complex subunit RuvA from Rickettsia canadensis (strain McKiel).